The primary structure comprises 71 residues: Small integral membrane protein 31 (71 aa).

Residues 8–28 (LEVAFILLAFFIFSLFTLASI) form a helical membrane-spanning segment. Basic residues predominate over residues 48–57 (RKRKEFKGKK). A disordered region spans residues 48–71 (RKRKEFKGKKNCSDEEHKIETMQP). N-linked (GlcNAc...) asparagine glycosylation is present at N58. Residues 58–71 (NCSDEEHKIETMQP) are compositionally biased toward basic and acidic residues.

The protein resides in the membrane. The protein is Small integral membrane protein 31 of Mus musculus (Mouse).